We begin with the raw amino-acid sequence, 314 residues long: MSTDLAQSWLTLSAPVAAARAAGRPLVALESTIIAHGMPYPENVRTAHEVEALILELGAEPATIALIDGRIRVGLSDDELERLGRSGKAHKVSRRDLPAVLTSGELGATTVAGTMICAALAGIEVFVTGGIGGVHRGAQETFDISADLQELARTSVAVVCAGAKSILDIGLTLEYLETQGVPVLTCEQENFAAFYKRDSGFRADYRLDDPAEQARFIRTKWDLGLAGGVLLSTPVPEAAAMASEEIDALTQQALDEAQAQGITGKAVTPFLLARIKALTGGRSLATNIALVKHNAEVGARLALALAQAARGAVA.

Catalysis depends on glutamate 30, which acts as the Proton donor. Positions 91 and 111 each coordinate substrate. Residue aspartate 143 coordinates Mn(2+). Residue 145–147 coordinates substrate; sequence SAD. The Nucleophile role is filled by lysine 164.

The protein belongs to the pseudouridine-5'-phosphate glycosidase family. As to quaternary structure, homotrimer. Mn(2+) serves as cofactor.

It catalyses the reaction D-ribose 5-phosphate + uracil = psi-UMP + H2O. Functionally, catalyzes the reversible cleavage of pseudouridine 5'-phosphate (PsiMP) to ribose 5-phosphate and uracil. Functions biologically in the cleavage direction, as part of a pseudouridine degradation pathway. The protein is Pseudouridine-5'-phosphate glycosidase of Cupriavidus pinatubonensis (strain JMP 134 / LMG 1197) (Cupriavidus necator (strain JMP 134)).